Here is a 189-residue protein sequence, read N- to C-terminus: Elongation factor P (189 aa).

Belongs to the elongation factor P family.

Its subcellular location is the cytoplasm. Its pathway is protein biosynthesis; polypeptide chain elongation. Involved in peptide bond synthesis. Stimulates efficient translation and peptide-bond synthesis on native or reconstituted 70S ribosomes in vitro. Probably functions indirectly by altering the affinity of the ribosome for aminoacyl-tRNA, thus increasing their reactivity as acceptors for peptidyl transferase. This chain is Elongation factor P, found in Chloroflexus aurantiacus (strain ATCC 29364 / DSM 637 / Y-400-fl).